A 162-amino-acid chain; its full sequence is Functional amyloid chaperone FapA (162 aa).

Positions 1–28 (MSGSSLRIVVPALLVIVGSVPVSLPAHA) are cleaved as a signal peptide.

It belongs to the FapA family. As to quaternary structure, monomer in solution. Interacts with FapC but not FapB in vitro.

It localises to the periplasm. An intrinsically disordered chaperone for fibril amyloid FapC that guards against fibrillation within the periplasm. Upon overexpression of the endogenous six-gene locus (fapA-fapF), cells form large clumps during liquid growth, make large amounts of biofilm and produce amyloid fibrils. The sequence is that of Functional amyloid chaperone FapA from Pseudomonas aeruginosa (strain ATCC 15692 / DSM 22644 / CIP 104116 / JCM 14847 / LMG 12228 / 1C / PRS 101 / PAO1).